The primary structure comprises 279 residues: 4-diphosphocytidyl-2-C-methyl-D-erythritol kinase (279 aa).

Lys-10 is an active-site residue. Residue 91–101 (PVASGIGGGSA) coordinates ATP. Residue Asp-130 is part of the active site.

It belongs to the GHMP kinase family. IspE subfamily.

It carries out the reaction 4-CDP-2-C-methyl-D-erythritol + ATP = 4-CDP-2-C-methyl-D-erythritol 2-phosphate + ADP + H(+). The protein operates within isoprenoid biosynthesis; isopentenyl diphosphate biosynthesis via DXP pathway; isopentenyl diphosphate from 1-deoxy-D-xylulose 5-phosphate: step 3/6. In terms of biological role, catalyzes the phosphorylation of the position 2 hydroxy group of 4-diphosphocytidyl-2C-methyl-D-erythritol. The sequence is that of 4-diphosphocytidyl-2-C-methyl-D-erythritol kinase from Ruegeria pomeroyi (strain ATCC 700808 / DSM 15171 / DSS-3) (Silicibacter pomeroyi).